A 195-amino-acid polypeptide reads, in one-letter code: Interferon tau-1 (195 aa).

An N-terminal signal peptide occupies residues 1 to 23; it reads MAFVLSLLMALVLVSYGPGGSLG. Disulfide bonds link Cys24–Cys122 and Cys52–Cys162.

The protein belongs to the alpha/beta interferon family. IFN-alphaII subfamily. In terms of tissue distribution, constitutively and exclusively expressed in the mononuclear cells of the extraembryonic trophectoderm.

The protein resides in the secreted. Its function is as follows. Paracrine hormone primarily responsible for maternal recognition of pregnancy. Interacts with endometrial receptors, probably type I interferon receptors, and blocks estrogen receptor expression, preventing the estrogen-induced increase in oxytocin receptor expression in the endometrium. This results in the suppression of the pulsatile endometrial release of the luteolytic hormone prostaglandin F2-alpha, hindering the regression of the corpus luteum (luteolysis) and therefore a return to ovarian cyclicity. This, and a possible direct effect of IFN-tau on prostaglandin synthesis, leads in turn to continued ovarian progesterone secretion, which stimulates the secretion by the endometrium of the nutrients required for the growth of the conceptus. In summary, displays particularly high antiviral and antiproliferative potency concurrently with particular weak cytotoxicity, high antiluteolytic activity and immunomodulatory properties. In contrast with other IFNs, IFN-tau is not virally inducible. The sequence is that of Interferon tau-1 (IFNT1) from Ovis aries (Sheep).